The chain runs to 710 residues: FAST kinase domain-containing protein 2, mitochondrial (710 aa).

Ser126 and Ser140 each carry phosphoserine. An RAP domain is found at 634–691; the sequence is VAVLCVSRSAYCLGSSHPRGFLAMKMRHLNAMGFHVILVNNWEMDKLEMEDAVTFLKT. Position 708 is a phosphoserine (Ser708).

Belongs to the FAST kinase family. In terms of assembly, monomer. Found in a complex with GRSF1, DDX28, DHX30 and FASTKD5. Associates with the 16S mitochondrial rRNA (16S mt-rRNA). Forms a regulatory protein-RNA complex, consisting of RCC1L, NGRN, RPUSD3, RPUSD4, TRUB2, FASTKD2 and 16S mt-rRNA. In terms of tissue distribution, expression detected in spleen, thymus, testis, ovary, colon, heart, smooth muscle, kidney, brain, lung, liver and white adipose tissue with highest expression in heart, smooth muscle and thyroid.

The protein localises to the mitochondrion matrix. Its subcellular location is the mitochondrion nucleoid. Its function is as follows. Plays an important role in assembly of the mitochondrial large ribosomal subunit. As a component of a functional protein-RNA module, consisting of RCC1L, NGRN, RPUSD3, RPUSD4, TRUB2, FASTKD2 and 16S mitochondrial ribosomal RNA (16S mt-rRNA), controls 16S mt-rRNA abundance and is required for intra-mitochondrial translation. May play a role in mitochondrial apoptosis. This chain is FAST kinase domain-containing protein 2, mitochondrial, found in Homo sapiens (Human).